The primary structure comprises 268 residues: Dioscorin DB3S (268 aa).

The region spanning 25 to 259 (DEFSYIEGNP…TNFRSVFYFE (235 aa)) is the Alpha-carbonic anhydrase domain. A disulfide bond links Cys50 and Cys209. The Proton acceptor role is filled by His91. Residues Asp92, 117–119 (HFH), Gln136, and 205–206 (TA) each bind L-ascorbate.

The protein belongs to the alpha-class carbonic anhydrase family. In terms of assembly, monomer. Homodimer. Post-translationally, not glycosylated. In terms of tissue distribution, expressed in tuber (at protein level).

The catalysed reaction is hydrogencarbonate + H(+) = CO2 + H2O. It catalyses the reaction 2 monodehydro-L-ascorbate radical + NADH + H(+) = 2 L-ascorbate + NAD(+). Functionally, storage protein of tuber. Involved in protection against oxidative stress. Has carbonate dehydratase and weak trypsin inhibitor activity detected by measuring the dehydration of sodium bicarbonate and the inhibition of trypsin-catalyzed hydrolysis of N-benzoyl-L-arginine-4-nitro anilide, respectively. Contrarily, no carbonate dehydratase or trypsin inhibitor activity detected by measuring the hydrolysis of 4-nitrophenyl acetate or the inhibition of bovine trypsin-catalyzed hydrolysis of N-benzoyl-L-arginine ethyl ester, respectively. Has dehydroascorbate (DHA) reductase and monodehydroascorbate (MDA) reductase activities. Catalyzes the reactions of carbonate dehydratase and DHA reductase independently of zinc and glutathione (GSH). The coupled reaction is capable of recycling a plant antioxidant ascorbate using ubiquitous compounds H(2)O and CO(2). Exhibits antioxidant activity. Able to scavenge 1,1-diphenyl-2-picrylhydrazyl (DPPH) radical and hydroxyl radicals. Exhibits immunomodulatory activity. Activates Toll-like receptor 4 signaling pathways by up-regulating the gene expression of pro-inflammatory cytokines, such as tumor necrosis factor alpha, interleukin-1 beta and interleukin-6, and chemokines RANTES and MCP-1, in mouse RAW 264.7 macrophages. Stimulates the phagocytosis of E.coli by the LPS-treated mouse macrophages. This is Dioscorin DB3S from Dioscorea polystachya (Chinese yam).